We begin with the raw amino-acid sequence, 455 residues long: Dihydrolipoyllysine-residue succinyltransferase component of 2-oxoglutarate dehydrogenase complex, mitochondrial (455 aa).

Residues 1–68 constitute a mitochondrion transit peptide; sequence MLSRSRCASR…RFFRTTAVCK (68 aa). The Lipoyl-binding domain maps to 71 to 145; sequence VITVKTPAFA…EGGTPLFTLR (75 aa). Ser82 carries the phosphoserine modification. Lys111 bears the N6-lipoyllysine mark. Residue Lys155 is modified to N6-acetyllysine. Residues 155–173 are compositionally biased toward low complexity; that stretch reads KPAAAPAAAAPKAEPTVSA. A disordered region spans residues 155–220; that stretch reads KPAAAPAAAA…PRAEAGAGVG (66 aa). Residues 174–193 are compositionally biased toward pro residues; it reads VPPPPAAPIPTQMPPVPSPS. 5 positions are modified to N6-acetyllysine: Lys269, Lys274, Lys275, Lys279, and Lys309. Active-site residues include His426 and Asp430.

Belongs to the 2-oxoacid dehydrogenase family. The 2-oxoglutarate dehydrogenase complex is composed of OGDH (2-oxoglutarate dehydrogenase; E1), DLST (dihydrolipoamide succinyltransferase; E2), DLD (dihydrolipoamide dehydrogenase; E3) and the assembly factor KGD4. It contains multiple copies of the three enzymatic components (E1, E2 and E3). In the nucleus, the 2-oxoglutarate dehydrogenase complex associates with KAT2A. Interacts with ABHD11; this interaction maintains the functional lipoylation of the 2-oxoglutarate dehydrogenase complex. Requires (R)-lipoate as cofactor.

It is found in the mitochondrion matrix. The protein localises to the nucleus. It catalyses the reaction N(6)-[(R)-dihydrolipoyl]-L-lysyl-[protein] + succinyl-CoA = N(6)-[(R)-S(8)-succinyldihydrolipoyl]-L-lysyl-[protein] + CoA. The protein operates within amino-acid degradation; L-lysine degradation via saccharopine pathway; glutaryl-CoA from L-lysine: step 6/6. Its pathway is carbohydrate metabolism; tricarboxylic acid cycle. Its function is as follows. Dihydrolipoamide succinyltransferase (E2) component of the 2-oxoglutarate dehydrogenase complex. The 2-oxoglutarate dehydrogenase complex catalyzes the overall conversion of 2-oxoglutarate to succinyl-CoA and CO(2). The 2-oxoglutarate dehydrogenase complex is mainly active in the mitochondrion. A fraction of the 2-oxoglutarate dehydrogenase complex also localizes in the nucleus and is required for lysine succinylation of histones: associates with KAT2A on chromatin and provides succinyl-CoA to histone succinyltransferase KAT2A. The protein is Dihydrolipoyllysine-residue succinyltransferase component of 2-oxoglutarate dehydrogenase complex, mitochondrial of Bos taurus (Bovine).